The primary structure comprises 55 residues: Large ribosomal subunit protein bL33A (55 aa).

This sequence belongs to the bacterial ribosomal protein bL33 family.

The chain is Large ribosomal subunit protein bL33A from Mycobacterium ulcerans (strain Agy99).